The primary structure comprises 187 residues: Transmembrane protein 11-A, mitochondrial (187 aa).

2 helical membrane passes run 79 to 95 and 102 to 119; these read TAVL…LALP and VSLP…LYGI.

It belongs to the TMEM11 family.

It is found in the mitochondrion inner membrane. Functionally, plays a role in mitochondrial morphogenesis. This Xenopus laevis (African clawed frog) protein is Transmembrane protein 11-A, mitochondrial (tmem11-a).